The following is a 218-amino-acid chain: Adenylate kinase (218 aa).

Residue 10–15 coordinates ATP; that stretch reads GAGKGT. The interval 30 to 59 is NMP; sequence STGDMLRAAVKAATPLGLAAKKIMDEGGLV. AMP contacts are provided by residues T31, R36, 57–59, 85–88, and Q92; these read GLV and GFPR. The tract at residues 122–159 is LID; it reads GRRVHLASGRTYHVTFNPPAVPDKDDLTGEPLVQRNDD. Residues R123 and 132–133 contribute to the ATP site; that span reads TY. Positions 156 and 167 each coordinate AMP. Position 203 (G203) interacts with ATP.

It belongs to the adenylate kinase family. As to quaternary structure, monomer.

The protein resides in the cytoplasm. The enzyme catalyses AMP + ATP = 2 ADP. The protein operates within purine metabolism; AMP biosynthesis via salvage pathway; AMP from ADP: step 1/1. Catalyzes the reversible transfer of the terminal phosphate group between ATP and AMP. Plays an important role in cellular energy homeostasis and in adenine nucleotide metabolism. This Chlorobaculum tepidum (strain ATCC 49652 / DSM 12025 / NBRC 103806 / TLS) (Chlorobium tepidum) protein is Adenylate kinase.